A 399-amino-acid chain; its full sequence is tRNA-specific 2-thiouridylase MnmA (399 aa).

Residues 18–25 and L44 each bind ATP; that span reads AMSGGVDS. Catalysis depends on C112, which acts as the Nucleophile. C112 and C213 are joined by a disulfide. G136 serves as a coordination point for ATP. The segment at 163–165 is interaction with tRNA; the sequence is RDQ. The Cysteine persulfide intermediate role is filled by C213.

The protein belongs to the MnmA/TRMU family.

The protein localises to the cytoplasm. The catalysed reaction is S-sulfanyl-L-cysteinyl-[protein] + uridine(34) in tRNA + AH2 + ATP = 2-thiouridine(34) in tRNA + L-cysteinyl-[protein] + A + AMP + diphosphate + H(+). Its function is as follows. Catalyzes the 2-thiolation of uridine at the wobble position (U34) of tRNA, leading to the formation of s(2)U34. The chain is tRNA-specific 2-thiouridylase MnmA from Rhizobium leguminosarum bv. trifolii (strain WSM2304).